A 601-amino-acid chain; its full sequence is ATP-dependent RNA helicase DDX55 (601 aa).

The Q motif motif lies at 9 to 37; sequence WESLPVPLHPKVLSVLRELGFPYMTPVQS. The Helicase ATP-binding domain occupies 40-223; it reads IPLFMKNKDV…RAGLRNPVRI (184 aa). 53-60 provides a ligand contact to ATP; it reads AVTGSGKT. A DEAD box motif is present at residues 171–174; sequence DEAD. The Helicase C-terminal domain occupies 254-402; the sequence is KFNQLVHFLR…EMKLQKNTAD (149 aa). Residues 502 to 514 show a composition bias toward basic and acidic residues; that stretch reads QQRKEKTENDGRR. 2 disordered regions span residues 502–553 and 576–601; these read QQRK…EDME and EKGLLTSGKRSTNKADLEISDLEDDC. Residues 515–538 show a composition bias toward basic residues; sequence KFIKNKAWSKQKAKKEKKKKLTEK. The interval 534-563 is important for nuclear localization; the sequence is KLTEKRKREEGSDVEDEDMEELLNDTRLLK. Phosphoserine occurs at positions 545 and 595.

Belongs to the DEAD box helicase family. DDX55/SPB4 subfamily. As to quaternary structure, interacts with 28S rRNA. Interacts with double-stranded RNA substrates in vitro; the interaction stimulates ATPase activity.

It is found in the nucleus. It localises to the nucleoplasm. It catalyses the reaction ATP + H2O = ADP + phosphate + H(+). Its function is as follows. Probable ATP-binding RNA helicase. Has ATPase activity and is involved in the maturation of precursor large subunit rRNAs. This Bos taurus (Bovine) protein is ATP-dependent RNA helicase DDX55 (DDX55).